The sequence spans 97 residues: Putative septation protein SpoVG (97 aa).

It belongs to the SpoVG family.

Its function is as follows. Essential for sporulation. Interferes with or is a negative regulator of the pathway leading to asymmetric septation. The polypeptide is Putative septation protein SpoVG (Bacillus cytotoxicus (strain DSM 22905 / CIP 110041 / 391-98 / NVH 391-98)).